The primary structure comprises 531 residues: Muscarinic acetylcholine receptor M5 (531 aa).

The Extracellular segment spans residues 1–28; the sequence is MEGESYNESTVNGTPVNHQALERHGLWE. N7 carries an N-linked (GlcNAc...) asparagine glycan. A helical membrane pass occupies residues 29–52; the sequence is VITIAVVTAVVSLMTIVGNVLVMI. The Cytoplasmic portion of the chain corresponds to 53 to 65; it reads SFKVNSQLKTVNN. Residues 66-86 traverse the membrane as a helical segment; it reads YYLLSLACADLIIGIFSMNLY. Over 87 to 103 the chain is Extracellular; that stretch reads TTYILMGRWVLGSLACD. C102 and C182 are oxidised to a cystine. The helical transmembrane segment at 104-125 threads the bilayer; sequence LWLALDYVASNASVMNLLVISF. Topologically, residues 126-145 are cytoplasmic; the sequence is DRYFSITRPLTYRAKRTPKR. Residues 146-168 traverse the membrane as a helical segment; it reads AGIMIGLAWLVSFILWAPAILCW. Topologically, residues 169–190 are extracellular; that stretch reads QYLVGKRTVPPDECQIQFLSEP. Residues 191-213 form a helical membrane-spanning segment; that stretch reads TITFGTAIAAFYIPVSVMTILYC. The Cytoplasmic portion of the chain corresponds to 214–442; that stretch reads RIYRETEKRT…LVKERKAAQT (229 aa). Disordered stretches follow at residues 259–295 and 327–346; these read SLAQRERNQASWSSSRRSTSTTGKTTQATDLSADWEK and EAKESPGKESNTQETKETVV. Residues 267-287 show a composition bias toward low complexity; that stretch reads QASWSSSRRSTSTTGKTTQAT. The span at 334–346 shows a compositional bias: polar residues; the sequence is KESNTQETKETVV. A helical transmembrane segment spans residues 443-463; that stretch reads LSAILLAFIITWTPYNIMVLV. Topologically, residues 464 to 477 are extracellular; it reads STFCDKCVPVTLWH. Residues 478–497 traverse the membrane as a helical segment; it reads LGYWLCYVNSTINPICYALC. Over 498 to 531 the chain is Cytoplasmic; that stretch reads NRTFRKTFKLLLLCRWKKKKVEEKLYWQGNSKLP. Phosphothreonine is present on residues T500 and T504.

This sequence belongs to the G-protein coupled receptor 1 family. Muscarinic acetylcholine receptor subfamily. CHRM5 sub-subfamily.

Its subcellular location is the cell membrane. It localises to the postsynaptic cell membrane. Functionally, the muscarinic acetylcholine receptor mediates various cellular responses, including inhibition of adenylate cyclase, breakdown of phosphoinositides and modulation of potassium channels through the action of G proteins. Primary transducing effect is Pi turnover. This is Muscarinic acetylcholine receptor M5 (Chrm5) from Rattus norvegicus (Rat).